The sequence spans 1342 residues: DNA-directed RNA polymerase subunit beta (1342 aa).

Belongs to the RNA polymerase beta chain family. In terms of assembly, the RNAP catalytic core consists of 2 alpha, 1 beta, 1 beta' and 1 omega subunit. When a sigma factor is associated with the core the holoenzyme is formed, which can initiate transcription.

It catalyses the reaction RNA(n) + a ribonucleoside 5'-triphosphate = RNA(n+1) + diphosphate. Its function is as follows. DNA-dependent RNA polymerase catalyzes the transcription of DNA into RNA using the four ribonucleoside triphosphates as substrates. This chain is DNA-directed RNA polymerase subunit beta, found in Pseudoalteromonas atlantica (strain T6c / ATCC BAA-1087).